A 565-amino-acid chain; its full sequence is NAD-dependent malic enzyme (565 aa).

Residue Tyr104 is the Proton donor of the active site. NAD(+) is bound at residue Arg157. The Proton acceptor role is filled by Lys175. 3 residues coordinate a divalent metal cation: Glu246, Asp247, and Asp270. Residues Asp270 and Asn418 each coordinate NAD(+).

This sequence belongs to the malic enzymes family. In terms of assembly, homotetramer. The cofactor is Mg(2+). It depends on Mn(2+) as a cofactor.

It catalyses the reaction (S)-malate + NAD(+) = pyruvate + CO2 + NADH. The enzyme catalyses oxaloacetate + H(+) = pyruvate + CO2. The polypeptide is NAD-dependent malic enzyme (Escherichia coli O6:H1 (strain CFT073 / ATCC 700928 / UPEC)).